Consider the following 245-residue polypeptide: Thiopurine S-methyltransferase (245 aa).

Position 29–40 (29–40) interacts with S-adenosyl-L-methionine; that stretch reads WQEKWVSRRIGF. Phenylalanine 40 contacts substrate. An N6-acetyllysine modification is found at lysine 58. Positions 69, 90, and 152 each coordinate S-adenosyl-L-methionine.

Belongs to the class I-like SAM-binding methyltransferase superfamily. TPMT family. Monomer.

The protein resides in the cytoplasm. The enzyme catalyses S-adenosyl-L-methionine + a thiopurine = S-adenosyl-L-homocysteine + a thiopurine S-methylether.. The polypeptide is Thiopurine S-methyltransferase (TPMT) (Lycaon pictus (African wild dog)).